Here is a 227-residue protein sequence, read N- to C-terminus: Cytochrome c oxidase subunit 2 (227 aa).

Residues 1–14 (MAYPMQLGLQDATS) are Mitochondrial intermembrane-facing. The chain crosses the membrane as a helical span at residues 15 to 45 (PIMEELTDFHDHTLMIVFLISTLVLYIISMM). Residues 46 to 59 (LTTKLTHTSTMDAQ) lie on the Mitochondrial matrix side of the membrane. A helical transmembrane segment spans residues 60–87 (EVETIWTVLPAVILVMIALPSLRILYMM). Topologically, residues 88-227 (DEINDPYLTV…QFESWASSMT (140 aa)) are mitochondrial intermembrane. Cu cation contacts are provided by histidine 161, cysteine 196, glutamate 198, cysteine 200, histidine 204, and methionine 207. Residue glutamate 198 participates in Mg(2+) binding.

The protein belongs to the cytochrome c oxidase subunit 2 family. In terms of assembly, component of the cytochrome c oxidase (complex IV, CIV), a multisubunit enzyme composed of 14 subunits. The complex is composed of a catalytic core of 3 subunits MT-CO1, MT-CO2 and MT-CO3, encoded in the mitochondrial DNA, and 11 supernumerary subunits COX4I, COX5A, COX5B, COX6A, COX6B, COX6C, COX7A, COX7B, COX7C, COX8 and NDUFA4, which are encoded in the nuclear genome. The complex exists as a monomer or a dimer and forms supercomplexes (SCs) in the inner mitochondrial membrane with NADH-ubiquinone oxidoreductase (complex I, CI) and ubiquinol-cytochrome c oxidoreductase (cytochrome b-c1 complex, complex III, CIII), resulting in different assemblies (supercomplex SCI(1)III(2)IV(1) and megacomplex MCI(2)III(2)IV(2)). Found in a complex with TMEM177, COA6, COX18, COX20, SCO1 and SCO2. Interacts with TMEM177 in a COX20-dependent manner. Interacts with COX20. Interacts with COX16. Cu cation serves as cofactor.

The protein resides in the mitochondrion inner membrane. It carries out the reaction 4 Fe(II)-[cytochrome c] + O2 + 8 H(+)(in) = 4 Fe(III)-[cytochrome c] + 2 H2O + 4 H(+)(out). In terms of biological role, component of the cytochrome c oxidase, the last enzyme in the mitochondrial electron transport chain which drives oxidative phosphorylation. The respiratory chain contains 3 multisubunit complexes succinate dehydrogenase (complex II, CII), ubiquinol-cytochrome c oxidoreductase (cytochrome b-c1 complex, complex III, CIII) and cytochrome c oxidase (complex IV, CIV), that cooperate to transfer electrons derived from NADH and succinate to molecular oxygen, creating an electrochemical gradient over the inner membrane that drives transmembrane transport and the ATP synthase. Cytochrome c oxidase is the component of the respiratory chain that catalyzes the reduction of oxygen to water. Electrons originating from reduced cytochrome c in the intermembrane space (IMS) are transferred via the dinuclear copper A center (CU(A)) of subunit 2 and heme A of subunit 1 to the active site in subunit 1, a binuclear center (BNC) formed by heme A3 and copper B (CU(B)). The BNC reduces molecular oxygen to 2 water molecules using 4 electrons from cytochrome c in the IMS and 4 protons from the mitochondrial matrix. The protein is Cytochrome c oxidase subunit 2 (MT-CO2) of Cratogeomys bursarius (Plains pocket gopher).